The chain runs to 102 residues: Small ribosomal subunit protein uS10 (102 aa).

This sequence belongs to the universal ribosomal protein uS10 family. Part of the 30S ribosomal subunit.

In terms of biological role, involved in the binding of tRNA to the ribosomes. The polypeptide is Small ribosomal subunit protein uS10 (Geobacter sulfurreducens (strain ATCC 51573 / DSM 12127 / PCA)).